A 269-amino-acid chain; its full sequence is Uncharacterised methyltransferase MT1546 (269 aa).

This sequence belongs to the methyltransferase superfamily.

The polypeptide is Uncharacterised methyltransferase MT1546 (Mycobacterium tuberculosis (strain CDC 1551 / Oshkosh)).